Consider the following 90-residue polypeptide: Probable Fe(2+)-trafficking protein (90 aa).

The protein belongs to the Fe(2+)-trafficking protein family.

Functionally, could be a mediator in iron transactions between iron acquisition and iron-requiring processes, such as synthesis and/or repair of Fe-S clusters in biosynthetic enzymes. The polypeptide is Probable Fe(2+)-trafficking protein (Stutzerimonas stutzeri (strain A1501) (Pseudomonas stutzeri)).